A 246-amino-acid polypeptide reads, in one-letter code: tRNA pseudouridine synthase A (246 aa).

Catalysis depends on aspartate 52, which acts as the Nucleophile. Residue tyrosine 111 participates in substrate binding.

This sequence belongs to the tRNA pseudouridine synthase TruA family. In terms of assembly, homodimer.

It carries out the reaction uridine(38/39/40) in tRNA = pseudouridine(38/39/40) in tRNA. Functionally, formation of pseudouridine at positions 38, 39 and 40 in the anticodon stem and loop of transfer RNAs. The sequence is that of tRNA pseudouridine synthase A from Rhodopseudomonas palustris (strain BisA53).